A 1070-amino-acid polypeptide reads, in one-letter code: 3',5'-cyclic-AMP phosphodiesterase (1070 aa).

Disordered regions lie at residues 1 to 91, 166 to 215, 487 to 516, and 615 to 653; these read MSQE…KQDS, STSI…TRFQ, VPAS…LSQG, and SAGQ…RLPT. Residues 51–69 show a composition bias toward low complexity; sequence KQVQVQSQKFSSTSSTTKV. Polar residues predominate over residues 70 to 84; the sequence is ATHSFSMSSSAGTTG. Residues 166 to 210 are compositionally biased toward low complexity; that stretch reads STSIITSSEQRTSTSTSSSSSTRYIASGSSNLAGGNSNSASSASS. The segment covering 488-506 has biased composition (polar residues); that stretch reads PASNKSRRPNQSSSASRSG. The region spanning 656 to 985 is the PDEase domain; sequence VETPRENELG…DYYQSMIPPS (330 aa). Histidine 732 functions as the Proton donor in the catalytic mechanism. 732-736 is a binding site for 3',5'-cyclic AMP; the sequence is HNSLH. Histidine 736, histidine 772, aspartate 773, and aspartate 890 together coordinate a divalent metal cation. 3',5'-cyclic AMP-binding residues include aspartate 773, aspartate 890, and glutamine 941. The segment covering 1007–1024 has biased composition (acidic residues); sequence EESDQENLAELEEGDESG. A disordered region spans residues 1007 to 1070; sequence EESDQENLAE…CQNQPQHGGM (64 aa). Residues 1025 to 1042 show a composition bias toward low complexity; sequence GESTTTGTTGTTAASALS. Residues 1043–1054 show a composition bias toward gly residues; sequence GAGGGGGGGGGM. The segment covering 1060–1070 has biased composition (polar residues); it reads GCQNQPQHGGM.

Belongs to the cyclic nucleotide phosphodiesterase family. PDE4 subfamily. As to quaternary structure, monomer. It depends on a divalent metal cation as a cofactor.

The enzyme catalyses 3',5'-cyclic AMP + H2O = AMP + H(+). It participates in purine metabolism; 3',5'-cyclic AMP degradation; AMP from 3',5'-cyclic AMP: step 1/1. In terms of biological role, hydrolyzes the second messenger cAMP, which is a key regulator of many important physiological processes. Vital for female fertility. Required for learning/memory. The protein is 3',5'-cyclic-AMP phosphodiesterase (dnc) of Drosophila melanogaster (Fruit fly).